The sequence spans 333 residues: Eukaryotic translation initiation factor 2 subunit 2 (333 aa).

Disordered regions lie at residues 1–120 and 139–165; these read MSGD…LDIM and ILEKDEALEDEDSKKDDGISFSNQTGP. Serine 2 bears the N-acetylserine mark. Serine 2 carries the post-translational modification Phosphoserine. The residue at position 13 (serine 13) is a Phosphoserine; by PKC; in vitro. Residues 13 to 22 are compositionally biased toward basic residues; the sequence is SKKKKKKKKP. Threonine 36 is subject to Phosphothreonine. Residues 40–51 are compositionally biased toward basic and acidic residues; it reads ETKEVEPEPTED. Serine 67 is subject to Phosphoserine; by CK2. A compositionally biased stretch (basic and acidic residues) spans 96-105; the sequence is EGVKDLKIEN. A Glycyl lysine isopeptide (Lys-Gly) (interchain with G-Cter in SUMO2) cross-link involves residue lysine 102. 2 stretches are compositionally biased toward acidic residues: residues 106-118 and 139-149; these read DVQEPAEPEDDLD and ILEKDEALEDE. Serine 158 carries the post-translational modification Phosphoserine. Serine 218 is subject to Phosphoserine; by PKA; in vitro. N6-acetyllysine occurs at positions 265 and 293. The segment at 281–305 adopts a C4-type zinc-finger fold; the sequence is CHTCRSPDTILQKDTRLYFLQCETC.

This sequence belongs to the eIF-2-beta/eIF-5 family. As to quaternary structure, eukaryotic translation initiation factor 2 eIF2 is a heterotrimeric complex composed of an alpha (EIF2S1), a beta (EIF2S2) and a gamma (EIF2S3) chain. eIF2 is member of the 43S pre-initiation complex (43S PIC). eIF2 forms a complex with at least CELF1/CUGBP1, CALR, CALR3, EIF2S1, EIF2S2, HSP90B1 and HSPA5. Interacts with BZW2/5MP1. Interacts with EIF5. The N-terminus is blocked.

Its subcellular location is the cytoplasm. It is found in the cytosol. Its function is as follows. Component of the eIF2 complex that functions in the early steps of protein synthesis by forming a ternary complex with GTP and initiator tRNA. This complex binds to a 40S ribosomal subunit, followed by mRNA binding to form the 43S pre-initiation complex (43S PIC). Junction of the 60S ribosomal subunit to form the 80S initiation complex is preceded by hydrolysis of the GTP bound to eIF2 and release of an eIF2-GDP binary complex. In order for eIF2 to recycle and catalyze another round of initiation, the GDP bound to eIF2 must exchange with GTP by way of a reaction catalyzed by eIF2B. This chain is Eukaryotic translation initiation factor 2 subunit 2 (EIF2S2), found in Oryctolagus cuniculus (Rabbit).